We begin with the raw amino-acid sequence, 291 residues long: Small ribosomal subunit biogenesis GTPase RsgA (291 aa).

Residues His63 to Leu221 form the CP-type G domain. Residues Thr112 to Asp115 and Gly164 to Thr172 each bind GTP. Residues Cys245, Cys250, His252, and Cys258 each coordinate Zn(2+).

It belongs to the TRAFAC class YlqF/YawG GTPase family. RsgA subfamily. Monomer. Associates with 30S ribosomal subunit, binds 16S rRNA. Requires Zn(2+) as cofactor.

It is found in the cytoplasm. One of several proteins that assist in the late maturation steps of the functional core of the 30S ribosomal subunit. Helps release RbfA from mature subunits. May play a role in the assembly of ribosomal proteins into the subunit. Circularly permuted GTPase that catalyzes slow GTP hydrolysis, GTPase activity is stimulated by the 30S ribosomal subunit. The polypeptide is Small ribosomal subunit biogenesis GTPase RsgA (Staphylococcus haemolyticus (strain JCSC1435)).